The sequence spans 1110 residues: Isoleucine--tRNA ligase (1110 aa).

The 'HIGH' region motif lies at 47-57 (PSANGTPGIHH). A 'KMSKS' region motif is present at residues 658-662 (KMSKR). Lys661 serves as a coordination point for ATP.

This sequence belongs to the class-I aminoacyl-tRNA synthetase family. IleS type 2 subfamily. Monomer. It depends on Zn(2+) as a cofactor.

Its subcellular location is the cytoplasm. It carries out the reaction tRNA(Ile) + L-isoleucine + ATP = L-isoleucyl-tRNA(Ile) + AMP + diphosphate. Catalyzes the attachment of isoleucine to tRNA(Ile). As IleRS can inadvertently accommodate and process structurally similar amino acids such as valine, to avoid such errors it has two additional distinct tRNA(Ile)-dependent editing activities. One activity is designated as 'pretransfer' editing and involves the hydrolysis of activated Val-AMP. The other activity is designated 'posttransfer' editing and involves deacylation of mischarged Val-tRNA(Ile). This is Isoleucine--tRNA ligase from Cytophaga hutchinsonii (strain ATCC 33406 / DSM 1761 / CIP 103989 / NBRC 15051 / NCIMB 9469 / D465).